The following is a 464-amino-acid chain: Dihydrolipoyllysine-residue succinyltransferase component of 2-oxoglutarate dehydrogenase complex 1, mitochondrial (464 aa).

Residues 1–86 (MMLRAVFRRA…TALQRWVRPF (86 aa)) constitute a mitochondrion transit peptide. In terms of domain architecture, Lipoyl-binding spans 93–168 (VVEAVVPHMG…EPGNKVARIS (76 aa)). K134 bears the N6-lipoyllysine mark. The disordered stretch occupies residues 168–242 (STSADAVSHV…DRERRVPMTR (75 aa)). The segment covering 196–210 (EKPKVESTKVAEKPK) has biased composition (basic and acidic residues). The segment covering 211 to 220 (APSPPPPPPS) has biased composition (pro residues). Active-site residues include H435 and D439.

Belongs to the 2-oxoacid dehydrogenase family. Forms a 24-polypeptide structural core with octahedral symmetry. Requires (R)-lipoate as cofactor.

It localises to the mitochondrion. It carries out the reaction N(6)-[(R)-dihydrolipoyl]-L-lysyl-[protein] + succinyl-CoA = N(6)-[(R)-S(8)-succinyldihydrolipoyl]-L-lysyl-[protein] + CoA. It functions in the pathway amino-acid degradation; L-lysine degradation via saccharopine pathway; glutaryl-CoA from L-lysine: step 6/6. The 2-oxoglutarate dehydrogenase complex catalyzes the overall conversion of 2-oxoglutarate to succinyl-CoA and CO(2). It contains multiple copies of three enzymatic components: 2-oxoglutarate dehydrogenase (E1), dihydrolipoamide succinyltransferase (E2) and lipoamide dehydrogenase (E3). In Arabidopsis thaliana (Mouse-ear cress), this protein is Dihydrolipoyllysine-residue succinyltransferase component of 2-oxoglutarate dehydrogenase complex 1, mitochondrial.